The sequence spans 101 residues: NAD(P)H-quinone oxidoreductase subunit 4L, chloroplastic (101 aa).

3 helical membrane-spanning segments follow: residues 2–22, 32–52, and 61–81; these read MLEH…YGLI, MCLE…SDFF, and IFSI…LAIV.

It belongs to the complex I subunit 4L family. NDH is composed of at least 16 different subunits, 5 of which are encoded in the nucleus.

Its subcellular location is the plastid. It is found in the chloroplast thylakoid membrane. The enzyme catalyses a plastoquinone + NADH + (n+1) H(+)(in) = a plastoquinol + NAD(+) + n H(+)(out). It carries out the reaction a plastoquinone + NADPH + (n+1) H(+)(in) = a plastoquinol + NADP(+) + n H(+)(out). Its function is as follows. NDH shuttles electrons from NAD(P)H:plastoquinone, via FMN and iron-sulfur (Fe-S) centers, to quinones in the photosynthetic chain and possibly in a chloroplast respiratory chain. The immediate electron acceptor for the enzyme in this species is believed to be plastoquinone. Couples the redox reaction to proton translocation, and thus conserves the redox energy in a proton gradient. The chain is NAD(P)H-quinone oxidoreductase subunit 4L, chloroplastic from Helianthus annuus (Common sunflower).